A 340-amino-acid polypeptide reads, in one-letter code: Heat-inducible transcription repressor HrcA (340 aa).

The protein belongs to the HrcA family.

Its function is as follows. Negative regulator of class I heat shock genes (grpE-dnaK-dnaJ and groELS operons). Prevents heat-shock induction of these operons. This chain is Heat-inducible transcription repressor HrcA, found in Clavibacter michiganensis subsp. michiganensis (strain NCPPB 382).